The sequence spans 137 residues: Large ribosomal subunit protein eL28 (137 aa).

An N-acetylserine modification is found at S2. Glycyl lysine isopeptide (Lys-Gly) (interchain with G-Cter in SUMO2) cross-links involve residues K58 and K65. Position 115 is a phosphoserine (S115).

The protein belongs to the eukaryotic ribosomal protein eL28 family. Component of the large ribosomal subunit.

It localises to the cytoplasm. Its function is as follows. Component of the large ribosomal subunit. The ribosome is a large ribonucleoprotein complex responsible for the synthesis of proteins in the cell. The sequence is that of Large ribosomal subunit protein eL28 (RPL28) from Oryctolagus cuniculus (Rabbit).